A 472-amino-acid polypeptide reads, in one-letter code: NALCN channel auxiliary factor 2 (472 aa).

A helical transmembrane segment spans residues 47-67 (LASLLFFTVLLADHLWLCAGA). The interval 77 to 114 (AMRPPWGAGRERQPVPPRAVLPLPPPPPGEPSAPPGTC) is disordered. Residues 90–110 (PVPPRAVLPLPPPPPGEPSAP) are compositionally biased toward pro residues. Residues N120 and N193 are each glycosylated (N-linked (GlcNAc...) asparagine). The helical transmembrane segment at 433-453 (LCVLVLMLLHTVVSFSSNQGG) threads the bilayer.

The protein belongs to the NALF family.

Its subcellular location is the membrane. Its function is as follows. Probable component of the NALCN channel complex, a channel that regulates the resting membrane potential and controls neuronal excitability. This Homo sapiens (Human) protein is NALCN channel auxiliary factor 2.